We begin with the raw amino-acid sequence, 330 residues long: tRNA U34 carboxymethyltransferase (330 aa).

Carboxy-S-adenosyl-L-methionine contacts are provided by residues Lys91, Trp105, Lys110, Gly130, 152-154, 181-182, Met196, Tyr200, and Arg315; these read DPS and IE.

Belongs to the class I-like SAM-binding methyltransferase superfamily. CmoB family. In terms of assembly, homotetramer.

The enzyme catalyses carboxy-S-adenosyl-L-methionine + 5-hydroxyuridine(34) in tRNA = 5-carboxymethoxyuridine(34) in tRNA + S-adenosyl-L-homocysteine + H(+). Catalyzes carboxymethyl transfer from carboxy-S-adenosyl-L-methionine (Cx-SAM) to 5-hydroxyuridine (ho5U) to form 5-carboxymethoxyuridine (cmo5U) at position 34 in tRNAs. This chain is tRNA U34 carboxymethyltransferase, found in Shewanella oneidensis (strain ATCC 700550 / JCM 31522 / CIP 106686 / LMG 19005 / NCIMB 14063 / MR-1).